A 786-amino-acid polypeptide reads, in one-letter code: Endonuclease MutS2 (786 aa).

Position 335–342 (335–342 (GPNTGGKT)) interacts with ATP. A Smr domain is found at 711-786 (LDLRGERFEN…GLGVTVVELK (76 aa)).

Belongs to the DNA mismatch repair MutS family. MutS2 subfamily. As to quaternary structure, homodimer. Binds to stalled ribosomes, contacting rRNA.

Its function is as follows. Endonuclease that is involved in the suppression of homologous recombination and thus may have a key role in the control of bacterial genetic diversity. In terms of biological role, acts as a ribosome collision sensor, splitting the ribosome into its 2 subunits. Detects stalled/collided 70S ribosomes which it binds and splits by an ATP-hydrolysis driven conformational change. Acts upstream of the ribosome quality control system (RQC), a ribosome-associated complex that mediates the extraction of incompletely synthesized nascent chains from stalled ribosomes and their subsequent degradation. Probably generates substrates for RQC. This is Endonuclease MutS2 from Bacillus cereus (strain Q1).